Reading from the N-terminus, the 95-residue chain is Aspartyl/glutamyl-tRNA(Asn/Gln) amidotransferase subunit C (95 aa).

It belongs to the GatC family. In terms of assembly, heterotrimer of A, B and C subunits.

It carries out the reaction L-glutamyl-tRNA(Gln) + L-glutamine + ATP + H2O = L-glutaminyl-tRNA(Gln) + L-glutamate + ADP + phosphate + H(+). The enzyme catalyses L-aspartyl-tRNA(Asn) + L-glutamine + ATP + H2O = L-asparaginyl-tRNA(Asn) + L-glutamate + ADP + phosphate + 2 H(+). In terms of biological role, allows the formation of correctly charged Asn-tRNA(Asn) or Gln-tRNA(Gln) through the transamidation of misacylated Asp-tRNA(Asn) or Glu-tRNA(Gln) in organisms which lack either or both of asparaginyl-tRNA or glutaminyl-tRNA synthetases. The reaction takes place in the presence of glutamine and ATP through an activated phospho-Asp-tRNA(Asn) or phospho-Glu-tRNA(Gln). In Brucella abortus (strain S19), this protein is Aspartyl/glutamyl-tRNA(Asn/Gln) amidotransferase subunit C.